The sequence spans 921 residues: Isoleucine--tRNA ligase (921 aa).

The 'HIGH' region motif lies at 57 to 67; it reads PYANGELHMGH. L-isoleucyl-5'-AMP is bound at residue Glu552. A 'KMSKS' region motif is present at residues 593 to 597; that stretch reads KMSKS. Position 596 (Lys596) interacts with ATP. The Zn(2+) site is built by Cys888, Cys891, Cys908, and Cys911.

This sequence belongs to the class-I aminoacyl-tRNA synthetase family. IleS type 1 subfamily. Monomer. Zn(2+) serves as cofactor.

The protein resides in the cytoplasm. The catalysed reaction is tRNA(Ile) + L-isoleucine + ATP = L-isoleucyl-tRNA(Ile) + AMP + diphosphate. Functionally, catalyzes the attachment of isoleucine to tRNA(Ile). As IleRS can inadvertently accommodate and process structurally similar amino acids such as valine, to avoid such errors it has two additional distinct tRNA(Ile)-dependent editing activities. One activity is designated as 'pretransfer' editing and involves the hydrolysis of activated Val-AMP. The other activity is designated 'posttransfer' editing and involves deacylation of mischarged Val-tRNA(Ile). In Listeria innocua serovar 6a (strain ATCC BAA-680 / CLIP 11262), this protein is Isoleucine--tRNA ligase.